A 407-amino-acid chain; its full sequence is Uronyl 2-sulfotransferase (407 aa).

A disordered region spans residues Met-1–Ala-20. The Cytoplasmic portion of the chain corresponds to Met-1–Tyr-49. Residues Gly-50–Gly-70 traverse the membrane as a helical; Signal-anchor for type II membrane protein segment. Topologically, residues Gly-71–Arg-407 are lumenal. Residues Asn-85, Asn-141, and Asn-156 are each glycosylated (N-linked (GlcNAc...) asparagine). His-169 is a catalytic residue. Residues Asn-174 and Asn-320 are each glycosylated (N-linked (GlcNAc...) asparagine). The segment covering Thr-386–Trp-400 has biased composition (acidic residues). The interval Thr-386 to Arg-407 is disordered.

Belongs to the sulfotransferase 3 family.

Its subcellular location is the golgi apparatus membrane. Sulfotransferase that catalyzes the transfer of sulfate to the position 2 of uronyl residues in glycosaminoglycan chains. Has mainly activity toward iduronyl residues in dermatan sulfate, and weaker activity toward glucuronyl residues of chondroitin sulfate. Has no activity toward desulfated N-resulfated heparin. This is Uronyl 2-sulfotransferase from Mus musculus (Mouse).